Reading from the N-terminus, the 107-residue chain is UPF0122 protein EAT1b_2891 (107 aa).

It belongs to the UPF0122 family.

Functionally, might take part in the signal recognition particle (SRP) pathway. This is inferred from the conservation of its genetic proximity to ftsY/ffh. May be a regulatory protein. This is UPF0122 protein EAT1b_2891 from Exiguobacterium sp. (strain ATCC BAA-1283 / AT1b).